The chain runs to 228 residues: MYDITEWKHVFKLDPNKDITDDQLEQLCESGTDAVLIGGSDHVTEDDVLRLMSKVRRFLVPCVLEVSTIDAIVPGFDLYFIPTVLNSRDTDWIAGLHKKAMKEYGELMSPEEIVVEGYCILNQDCKAAALTNADTELDIEDIKAYARVAEHLFRLPVFYLEYSGMLGDSETVKETKAVLQETTLFYGGGIKDAETAVKMAEHADVIVVGNAIYENFEEALKTVQAVKG.

Lys-12 contributes to the sn-glycerol 1-phosphate binding site. Mg(2+) contacts are provided by Asp-14 and Ser-40. Sn-glycerol 1-phosphate contacts are provided by residues 159–164 (YLEYSG), Gly-189, and 209–210 (GN).

The protein belongs to the GGGP/HepGP synthase family. Group I subfamily. As to quaternary structure, homodimer. The cofactor is Mg(2+).

The enzyme catalyses sn-glycerol 1-phosphate + all-trans-heptaprenyl diphosphate = 3-heptaprenyl-sn-glycero-1-phosphate + diphosphate. Its pathway is membrane lipid metabolism; glycerophospholipid metabolism. In terms of biological role, prenyltransferase that catalyzes in vivo the transfer of the heptaprenyl moiety of heptaprenyl pyrophosphate (HepPP; 35 carbon atoms) to the C3 hydroxyl of sn-glycerol-1-phosphate (G1P), producing heptaprenylglyceryl phosphate (HepGP). This reaction is an ether-bond-formation step in the biosynthesis of archaea-type G1P-based membrane lipids found in Bacillales. This chain is Heptaprenylglyceryl phosphate synthase, found in Bacillus licheniformis (strain ATCC 14580 / DSM 13 / JCM 2505 / CCUG 7422 / NBRC 12200 / NCIMB 9375 / NCTC 10341 / NRRL NRS-1264 / Gibson 46).